We begin with the raw amino-acid sequence, 369 residues long: DNA replication and repair protein RecF (369 aa).

An ATP-binding site is contributed by 30–37; the sequence is GRNAQGKT.

It belongs to the RecF family.

Its subcellular location is the cytoplasm. In terms of biological role, the RecF protein is involved in DNA metabolism; it is required for DNA replication and normal SOS inducibility. RecF binds preferentially to single-stranded, linear DNA. It also seems to bind ATP. This chain is DNA replication and repair protein RecF, found in Streptococcus agalactiae serotype III (strain NEM316).